Here is a 510-residue protein sequence, read N- to C-terminus: Bifunctional purine biosynthesis protein PurH (510 aa).

The MGS-like domain occupies 1–142; it reads MRALISVSDK…KNFKDVLIVT (142 aa).

It belongs to the PurH family.

The catalysed reaction is (6R)-10-formyltetrahydrofolate + 5-amino-1-(5-phospho-beta-D-ribosyl)imidazole-4-carboxamide = 5-formamido-1-(5-phospho-D-ribosyl)imidazole-4-carboxamide + (6S)-5,6,7,8-tetrahydrofolate. It catalyses the reaction IMP + H2O = 5-formamido-1-(5-phospho-D-ribosyl)imidazole-4-carboxamide. Its pathway is purine metabolism; IMP biosynthesis via de novo pathway; 5-formamido-1-(5-phospho-D-ribosyl)imidazole-4-carboxamide from 5-amino-1-(5-phospho-D-ribosyl)imidazole-4-carboxamide (10-formyl THF route): step 1/1. The protein operates within purine metabolism; IMP biosynthesis via de novo pathway; IMP from 5-formamido-1-(5-phospho-D-ribosyl)imidazole-4-carboxamide: step 1/1. This is Bifunctional purine biosynthesis protein PurH from Campylobacter curvus (strain 525.92).